Consider the following 132-residue polypeptide: UPF0102 protein Ajs_0414 (132 aa).

Residues 1-23 (MGFLGKKVNGSAPARTTRAAGQA) form a disordered region.

Belongs to the UPF0102 family.

This chain is UPF0102 protein Ajs_0414, found in Acidovorax sp. (strain JS42).